An 88-amino-acid polypeptide reads, in one-letter code: Phosphocarrier protein HPr (88 aa).

Residues 1-88 (MKKIQVVVKD…KAVLEKHQVI (88 aa)) form the HPr domain. The active-site Pros-phosphohistidine intermediate is the histidine 15. Residue serine 47 is modified to Phosphoserine; by HPrK/P.

Belongs to the HPr family.

The protein resides in the cytoplasm. With respect to regulation, phosphorylation on Ser-47 inhibits the phosphoryl transfer from enzyme I to HPr. Functionally, general (non sugar-specific) component of the phosphoenolpyruvate-dependent sugar phosphotransferase system (sugar PTS). This major carbohydrate active-transport system catalyzes the phosphorylation of incoming sugar substrates concomitantly with their translocation across the cell membrane. The phosphoryl group from phosphoenolpyruvate (PEP) is transferred to the phosphoryl carrier protein HPr by enzyme I. Phospho-HPr then transfers it to the PTS EIIA domain. Its function is as follows. P-Ser-HPr interacts with the catabolite control protein A (CcpA), forming a complex that binds to DNA at the catabolite response elements cre, operator sites preceding a large number of catabolite-regulated genes. Thus, P-Ser-HPr is a corepressor in carbon catabolite repression (CCR), a mechanism that allows bacteria to coordinate and optimize the utilization of available carbon sources. P-Ser-HPr also plays a role in inducer exclusion, in which it probably interacts with several non-PTS permeases and inhibits their transport activity. In Mycoplasma pneumoniae (strain ATCC 29342 / M129 / Subtype 1) (Mycoplasmoides pneumoniae), this protein is Phosphocarrier protein HPr (ptsH).